A 148-amino-acid polypeptide reads, in one-letter code: MTATRIFYEGRFVTLKEKIKTLGRFCTVGVGNTLIDFGVFFLLTACHVSYLPAQICSYTAGIVNSYVWNRNWTFCVKRKADGKEIVRFLMINIAASGITFLLLYLFQNCGCSLLVSKLAATIGGMMMNFIGNRIWVFGDSLKNIQDQE.

The next 3 membrane-spanning stretches (helical) occupy residues 25–45, 85–105, and 118–138; these read FCTV…LLTA, IVRF…LLYL, and LAAT…WVFG.

Belongs to the GtrA family.

It is found in the cell membrane. This is an uncharacterized protein from Bacillus subtilis (strain 168).